A 602-amino-acid chain; its full sequence is Elongation factor 4 (602 aa).

A tr-type G domain is found at 7-188 (ENIRNFSIIA…SIIRLVPPPK (182 aa)). Residues 19-24 (DHGKST) and 135-138 (NKID) contribute to the GTP site.

The protein belongs to the TRAFAC class translation factor GTPase superfamily. Classic translation factor GTPase family. LepA subfamily.

The protein localises to the cell inner membrane. The enzyme catalyses GTP + H2O = GDP + phosphate + H(+). Functionally, required for accurate and efficient protein synthesis under certain stress conditions. May act as a fidelity factor of the translation reaction, by catalyzing a one-codon backward translocation of tRNAs on improperly translocated ribosomes. Back-translocation proceeds from a post-translocation (POST) complex to a pre-translocation (PRE) complex, thus giving elongation factor G a second chance to translocate the tRNAs correctly. Binds to ribosomes in a GTP-dependent manner. This chain is Elongation factor 4, found in Chlamydia trachomatis serovar D (strain ATCC VR-885 / DSM 19411 / UW-3/Cx).